We begin with the raw amino-acid sequence, 880 residues long: GRB2-associated and regulator of MAPK protein 2 (880 aa).

The tract at residues 12–320 (RWSMGAFPLD…HFLLLTDTPR (309 aa)) is CABIT. Disordered regions lie at residues 385–407 (PGAVRAPGPPGRLGPALPAPGDS), 461–483 (IVGPPRHEPEAPPPPVPPKSEAV), 527–548 (SSLSYYSSGLQDGAGSRSGSGS), 569–611 (SESS…ADTP), and 633–713 (APFG…ELGQ). Low complexity-rich tracts occupy residues 640–663 (PFSGPAHPSGAPAASSSGSISTSG) and 683–696 (QGYSAAPSSSLSSS). Serine 740 carries the phosphoserine modification. Positions 813 to 877 (SALSLEEVSR…KIMQFIKGWR (65 aa)) constitute an SAM domain.

It belongs to the GAREM family.

Its function is as follows. Probable adapter protein that provides a critical link between cell surface epidermal growth factor receptor and the MAPK/ERK signaling pathway. The polypeptide is GRB2-associated and regulator of MAPK protein 2 (Garem2) (Mus musculus (Mouse)).